Reading from the N-terminus, the 89-residue chain is MAISREKKTELINKYARHEGDTGSVEVQVAVLTEDINELNEHLRVHKKDFHSQRGLMKKIGHRRNLLAYLRKEDVNRYRDLIQSLGLRR.

This sequence belongs to the universal ribosomal protein uS15 family. In terms of assembly, part of the 30S ribosomal subunit. Forms a bridge to the 50S subunit in the 70S ribosome, contacting the 23S rRNA.

Functionally, one of the primary rRNA binding proteins, it binds directly to 16S rRNA where it helps nucleate assembly of the platform of the 30S subunit by binding and bridging several RNA helices of the 16S rRNA. In terms of biological role, forms an intersubunit bridge (bridge B4) with the 23S rRNA of the 50S subunit in the ribosome. The sequence is that of Small ribosomal subunit protein uS15 from Lactiplantibacillus plantarum (strain ATCC BAA-793 / NCIMB 8826 / WCFS1) (Lactobacillus plantarum).